The primary structure comprises 498 residues: Glycerol kinase (498 aa).

ADP is bound at residue Thr12. ATP contacts are provided by Thr12, Thr13, and Ser14. Thr12 lines the sn-glycerol 3-phosphate pocket. An ADP-binding site is contributed by Arg16. Sn-glycerol 3-phosphate is bound by residues Arg82, Glu83, Tyr134, and Asp243. 5 residues coordinate glycerol: Arg82, Glu83, Tyr134, Asp243, and Gln244. The ADP site is built by Thr265 and Gly308. ATP-binding residues include Thr265, Gly308, Gln312, and Gly409. Positions 409 and 413 each coordinate ADP.

It belongs to the FGGY kinase family. As to quaternary structure, homotetramer and homodimer (in equilibrium).

The catalysed reaction is glycerol + ATP = sn-glycerol 3-phosphate + ADP + H(+). It functions in the pathway polyol metabolism; glycerol degradation via glycerol kinase pathway; sn-glycerol 3-phosphate from glycerol: step 1/1. Its activity is regulated as follows. Activated by phosphorylation and inhibited by fructose 1,6-bisphosphate (FBP). Functionally, key enzyme in the regulation of glycerol uptake and metabolism. Catalyzes the phosphorylation of glycerol to yield sn-glycerol 3-phosphate. This is Glycerol kinase from Clostridium botulinum (strain Loch Maree / Type A3).